The following is a 581-amino-acid chain: Fibrous sheath-interacting protein 1 (581 aa).

The segment at 1 to 77 (MDIIKGNLDG…SNDDKQESCS (77 aa)) is disordered. A compositionally biased stretch (polar residues) spans 14 to 30 (PASNSRIRPGSRSSNAS). Residues 52–77 (GKEDHSESSNTENRRTSNDDKQESCS) show a composition bias toward basic and acidic residues. Residue Ser-87 is modified to Phosphoserine. A coiled-coil region spans residues 105–153 (EPKLKELDSQLQDAIQKMKKLDKILAKKQRREKEIKKQGLEMRIKLWEE). 2 disordered regions span residues 338–365 (SSFS…VTPG) and 555–581 (HLKL…CKEP). Basic and acidic residues-rich tracts occupy residues 344 to 360 (LENR…ERNM) and 569 to 581 (QETK…CKEP).

Belongs to the FSIP1 family.

This chain is Fibrous sheath-interacting protein 1 (FSIP1), found in Homo sapiens (Human).